The sequence spans 327 residues: MTKRIAITPGEPASIGPDLVIKLAQQAWPVELVVCADPNLLMTRAKMLGLPLQLRPYQPSQPPKPQTAGTLTIAPFTLAEEVECGVLNEANSAYVVETLRYAGEKNMSNEFDAVVTGPVHKGIINQAGIPFSGHTEFFALQANCADVVMMLAAPGLQVALMTTHIPLAYVAKAITRDRLHHIITILHRELVSKFGLGSPKIYVCGLNPHAGEDGHLGREEIDTIIPALNELREQGMDIVGPLPADTLFQPKYLEQADVVLAMYHDQGLPVLKSLGFGKSVNITLGLPYIRTSVDHGTALELAGSGKADCGSFTCALNKAIELASKSK.

Substrate contacts are provided by H134 and T135. H164, H209, and H264 together coordinate a divalent metal cation. K272, N281, and R290 together coordinate substrate.

It belongs to the PdxA family. Homodimer. Zn(2+) is required as a cofactor. Mg(2+) serves as cofactor. Requires Co(2+) as cofactor.

It is found in the cytoplasm. The catalysed reaction is 4-(phosphooxy)-L-threonine + NAD(+) = 3-amino-2-oxopropyl phosphate + CO2 + NADH. Its pathway is cofactor biosynthesis; pyridoxine 5'-phosphate biosynthesis; pyridoxine 5'-phosphate from D-erythrose 4-phosphate: step 4/5. Catalyzes the NAD(P)-dependent oxidation of 4-(phosphooxy)-L-threonine (HTP) into 2-amino-3-oxo-4-(phosphooxy)butyric acid which spontaneously decarboxylates to form 3-amino-2-oxopropyl phosphate (AHAP). This is 4-hydroxythreonine-4-phosphate dehydrogenase from Shewanella frigidimarina (strain NCIMB 400).